Consider the following 503-residue polypeptide: U6 snRNA (guanine-N(2))-methyltransferase THUMPD2 (503 aa).

The 106-residue stretch at 161 to 266 folds into the THUMP domain; that stretch reads CQLEKQIKEE…DIYSVVGIPV (106 aa).

The protein belongs to the methyltransferase superfamily. Part of the heterodimeric THUMPD2-TRM112 methyltransferase complex; this complex forms an active tRNA methyltransferase, where TRMT112 acts as an activator of the catalytic subunit THUMPD2. As to expression, expressed in a variety of tissues including brain, colon, gingiva, heart, kidney, liver, lung, placenta, small intestine, spleen and thymus.

The protein resides in the nucleus. The catalysed reaction is guanosine in U6 snRNA + S-adenosyl-L-methionine = N(2)-methylguanosine in U6 snRNA + S-adenosyl-L-homocysteine + H(+). In terms of biological role, catalytic subunit of the THUMPD2-TRM112 methyltransferase complex, that specifically mediates the S-adenosyl-L-methionine-dependent N(2)-methylation of guanosine nucleotides, most probably at position 72 (m2G72), in the U6snRNA of the major spliceosome. This modification in the U6 snRNA affects the constitutive splicing efficiency of introns that have suboptimal splice sites and can impact final mRNA levels. This is U6 snRNA (guanine-N(2))-methyltransferase THUMPD2 from Homo sapiens (Human).